Consider the following 211-residue polypeptide: uncharacterized protein (211 aa).

This is an uncharacterized protein from Treponema pallidum (strain Nichols).